Consider the following 204-residue polypeptide: Recombination protein RecR (204 aa).

The segment at 58-75 (CSVCQNVTDREEDPCSIC) adopts a C4-type zinc-finger fold. The 99-residue stretch at 83–181 (TVICVVESPV…EVTKIARGIP (99 aa)) folds into the Toprim domain.

This sequence belongs to the RecR family.

Functionally, may play a role in DNA repair. It seems to be involved in an RecBC-independent recombinational process of DNA repair. It may act with RecF and RecO. This Chlorobium luteolum (strain DSM 273 / BCRC 81028 / 2530) (Pelodictyon luteolum) protein is Recombination protein RecR.